The following is a 318-amino-acid chain: MAAREVFKRVIPPLSTRLHKGQSGRIGVVGGSLEYTGAPYYAAMAALYTGVDLCHVFCAQDAAPAIKCYSPELVVHPSIVSKRDCEHLNPVAIDNCIETAVDRMSPLLCRLDSLVVGPGLSRDPVMLAMAKRIVEKVISLGTPLVIDADGLCLVEQTPGLVMGYQNVILTPNTNEFKRLCHSVNIDASENCEVAAVQLSKALGSVTILCKGSKDLIATGDDILFVSDPTSLRRCGGQGDVLAGILCAFLAWRNGYQSGRWTAQDQSTDISLMIVASNASSFARKCAALAFEKHKRSIVASSILKEIGPAFDSLYDDEL.

Positions Ala-3–Leu-313 constitute a YjeF C-terminal domain. Residues Gly-119 and Asn-172–Arg-178 each bind (6S)-NADPHX. Residues Lys-210–Asp-214 and Thr-229–Gly-238 contribute to the ATP site. Asp-239 provides a ligand contact to (6S)-NADPHX.

Belongs to the NnrD/CARKD family. It depends on Mg(2+) as a cofactor.

It localises to the cytoplasm. It carries out the reaction (6S)-NADHX + ATP = ADP + phosphate + NADH + H(+). The catalysed reaction is (6S)-NADPHX + ATP = ADP + phosphate + NADPH + H(+). Catalyzes the dehydration of the S-form of NAD(P)HX at the expense of ATP, which is converted to ADP. Together with NAD(P)HX epimerase, which catalyzes the epimerization of the S- and R-forms, the enzyme allows the repair of both epimers of NAD(P)HX, a damaged form of NAD(P)H that is a result of enzymatic or heat-dependent hydration. This chain is ATP-dependent (S)-NAD(P)H-hydrate dehydratase, found in Batrachochytrium dendrobatidis (strain JAM81 / FGSC 10211) (Frog chytrid fungus).